The primary structure comprises 245 residues: 6-carboxyhexanoate--CoA ligase (245 aa).

This sequence belongs to the BioW family. In terms of assembly, homodimer. The cofactor is Mg(2+).

The catalysed reaction is heptanedioate + ATP + CoA = 6-carboxyhexanoyl-CoA + AMP + diphosphate. Its pathway is metabolic intermediate metabolism; pimeloyl-CoA biosynthesis; pimeloyl-CoA from pimelate: step 1/1. In terms of biological role, catalyzes the transformation of pimelate into pimeloyl-CoA with concomitant hydrolysis of ATP to AMP. This Sulfurihydrogenibium azorense (strain DSM 15241 / OCM 825 / Az-Fu1) protein is 6-carboxyhexanoate--CoA ligase.